We begin with the raw amino-acid sequence, 447 residues long: Phosphoglucosamine mutase (447 aa).

S103 acts as the Phosphoserine intermediate in catalysis. S103, D242, D244, and D246 together coordinate Mg(2+). S103 carries the phosphoserine modification.

Belongs to the phosphohexose mutase family. It depends on Mg(2+) as a cofactor. Post-translationally, activated by phosphorylation.

It catalyses the reaction alpha-D-glucosamine 1-phosphate = D-glucosamine 6-phosphate. Functionally, catalyzes the conversion of glucosamine-6-phosphate to glucosamine-1-phosphate. The protein is Phosphoglucosamine mutase of Dinoroseobacter shibae (strain DSM 16493 / NCIMB 14021 / DFL 12).